We begin with the raw amino-acid sequence, 258 residues long: UPF0246 protein ETA_07010 (258 aa).

Belongs to the UPF0246 family.

The chain is UPF0246 protein ETA_07010 from Erwinia tasmaniensis (strain DSM 17950 / CFBP 7177 / CIP 109463 / NCPPB 4357 / Et1/99).